The chain runs to 24 residues: Calreticulin (24 aa).

It belongs to the calreticulin family. As to quaternary structure, monomer. Component of an EIF2 complex at least composed of CELF1/CUGBP1, CALR, CALR3, EIF2S1, EIF2S2, HSP90B1 and HSPA5. Interacts with PDIA3/ERp57 and SPACA9. Interacts with TRIM21. Interacts with NR3C1. Interacts with PPIB. Interacts (via P-domain) with PDIA5. Interacts with CLCC1. Pancreas.

Its subcellular location is the endoplasmic reticulum lumen. It is found in the cytoplasm. It localises to the cytosol. The protein localises to the cytolytic granule. The protein resides in the secreted. Its subcellular location is the extracellular space. It is found in the extracellular matrix. It localises to the cell surface. The protein localises to the sarcoplasmic reticulum lumen. The protein resides in the cytoplasmic vesicle. Its subcellular location is the secretory vesicle. It is found in the cortical granule. Calcium-binding chaperone that promotes folding, oligomeric assembly and quality control in the endoplasmic reticulum (ER) via the calreticulin/calnexin cycle. This lectin interacts transiently with almost all of the monoglucosylated glycoproteins that are synthesized in the ER. Interacts with the DNA-binding domain of NR3C1 and mediates its nuclear export. Involved in maternal gene expression regulation. May participate in oocyte maturation via the regulation of calcium homeostasis. Present in the cortical granules of non-activated oocytes, is exocytosed during the cortical reaction in response to oocyte activation and might participate in the block to polyspermy. The chain is Calreticulin (CALR) from Canis lupus familiaris (Dog).